Reading from the N-terminus, the 309-residue chain is Probable 5-dehydro-4-deoxyglucarate dehydratase (309 aa).

Belongs to the DapA family.

The enzyme catalyses 5-dehydro-4-deoxy-D-glucarate + H(+) = 2,5-dioxopentanoate + CO2 + H2O. It functions in the pathway carbohydrate acid metabolism; D-glucarate degradation; 2,5-dioxopentanoate from D-glucarate: step 2/2. The sequence is that of Probable 5-dehydro-4-deoxyglucarate dehydratase from Saccharopolyspora erythraea (strain ATCC 11635 / DSM 40517 / JCM 4748 / NBRC 13426 / NCIMB 8594 / NRRL 2338).